The following is a 455-amino-acid chain: SH3 domain-binding protein 5 (455 aa).

Over residues 1–12 (MDAALKRSRSEE) the composition is skewed to basic and acidic residues. The interval 1-63 (MDAALKRSRS…QSTDDINRRE (63 aa)) is disordered. A compositionally biased stretch (acidic residues) spans 22–41 (DEEEEEEEGMEQGLEEEEEV). The interval 31-265 (MEQGLEEEEE…EIHERRRSSA (235 aa)) is sufficient for interaction with RAB11A and for guanine nucleotide exchange activity. Residues 42–51 (DPRIQGELEK) show a composition bias toward basic and acidic residues. 4 coiled-coil regions span residues 44-90 (RIQG…LVKK), 97-145 (DSKP…RLLE), 154-200 (AWQE…LEKK), and 211-255 (YFEL…MISD). Disordered regions lie at residues 259–293 (ERRR…PEPD) and 306–345 (SCSN…VRPG). The segment covering 306–317 (SCSNFVSEDDSE) has biased composition (acidic residues). Residues 320–332 (SVSSFSSGPTSPS) are compositionally biased toward low complexity. At S351 the chain carries Phosphoserine; by MAPK12 and MAPK9. A disordered region spans residues 369 to 435 (SECSGASSPE…ALENRMKQLS (67 aa)). 2 positions are modified to phosphoserine: S375 and S376. Residues 380-396 (EVERGDRAEGAENKTSD) are compositionally biased toward basic and acidic residues. The span at 403–421 (GLSSSSGSGGSSKSQSSTS) shows a compositional bias: low complexity. S418 and S421 each carry phosphoserine.

It belongs to the SH3BP5 family. As to quaternary structure, interacts with BTK. Interacts with all isoforms of MAPK8, MAPK9, MAPK10 and MAPK12. Interacts with GDP-bound and nucleotide-free forms of RAB11A. Highly expressed in testis and ovaries. It is also expressed in a variety of tissues including spleen, lymph node, thymus, bone marrow, fetal liver, colon, small intestine and prostate.

The protein resides in the cytoplasmic vesicle membrane. Its subcellular location is the mitochondrion. Its function is as follows. Functions as a guanine nucleotide exchange factor (GEF) with specificity for RAB11A and RAB25. Inhibits the auto- and transphosphorylation activity of BTK. Plays a negative regulatory role in BTK-related cytoplasmic signaling in B-cells. May be involved in BCR-induced apoptotic cell death. The chain is SH3 domain-binding protein 5 (SH3BP5) from Homo sapiens (Human).